The primary structure comprises 254 residues: Claudin-16 (254 aa).

Over Met-1–Asp-22 the chain is Cytoplasmic. A helical membrane pass occupies residues Leu-23–Thr-43. Residues Trp-44–Arg-98 lie on the Extracellular side of the membrane. The chain crosses the membrane as a helical span at residues Ala-99–Leu-119. Residues Asp-120–Arg-134 lie on the Cytoplasmic side of the membrane. The chain crosses the membrane as a helical span at residues Ile-135 to Val-155. At Trp-156–Gly-188 the chain is on the extracellular side. The chain crosses the membrane as a helical span at residues Met-189–Phe-209. Residues Lys-210 to Val-254 lie on the Cytoplasmic side of the membrane. Residues Thr-252–Val-254 carry the Interaction with TJP1 motif.

It belongs to the claudin family. In terms of assembly, can form heteropolymeric tight junction strands with other claudins. Interacts with CLDN19. Interacts (via PDZ-binding motif TRV) with TJP1 (via PDZ domain). Cannot form tight junction strands on its own. In terms of tissue distribution, expressed preferentially in kidney.

It is found in the cell junction. Its subcellular location is the tight junction. The protein localises to the cell membrane. The enzyme catalyses Mg(2+)(in) = Mg(2+)(out). The catalysed reaction is Ca(2+)(in) = Ca(2+)(out). It carries out the reaction Na(+)(in) = Na(+)(out). It catalyses the reaction K(+)(in) = K(+)(out). The enzyme catalyses Rb(+)(in) = Rb(+)(out). The catalysed reaction is Cs(+)(in) = Cs(+)(out). It carries out the reaction Li(+)(in) = Li(+)(out). Its function is as follows. Forms paracellular channels: coassembles with CLDN19 into tight junction strands with cation-selective channels through the strands, conveying epithelial permeability in a process known as paracellular tight junction permeability. Involved in the maintenance of ion gradients along the nephron. In the thick ascending limb (TAL) of Henle's loop, facilitates sodium paracellular permeability from the interstitial compartment to the lumen, contributing to the lumen-positive transepithelial potential that drives paracellular magnesium and calcium reabsorption. This Bos taurus (Bovine) protein is Claudin-16 (CLDN16).